We begin with the raw amino-acid sequence, 153 residues long: Peptide methionine sulfoxide reductase MsrA (153 aa).

Residue cysteine 10 is part of the active site.

Belongs to the MsrA Met sulfoxide reductase family.

The catalysed reaction is L-methionyl-[protein] + [thioredoxin]-disulfide + H2O = L-methionyl-(S)-S-oxide-[protein] + [thioredoxin]-dithiol. It catalyses the reaction [thioredoxin]-disulfide + L-methionine + H2O = L-methionine (S)-S-oxide + [thioredoxin]-dithiol. Functionally, has an important function as a repair enzyme for proteins that have been inactivated by oxidation. Catalyzes the reversible oxidation-reduction of methionine sulfoxide in proteins to methionine. The sequence is that of Peptide methionine sulfoxide reductase MsrA from Methanococcoides burtonii (strain DSM 6242 / NBRC 107633 / OCM 468 / ACE-M).